The chain runs to 325 residues: Putative gluconeogenesis factor (325 aa).

It belongs to the gluconeogenesis factor family.

It is found in the cytoplasm. In terms of biological role, required for morphogenesis under gluconeogenic growth conditions. This is Putative gluconeogenesis factor from Streptococcus pneumoniae serotype 4 (strain ATCC BAA-334 / TIGR4).